We begin with the raw amino-acid sequence, 498 residues long: Glycerol kinase (498 aa).

Thr12 lines the ADP pocket. ATP contacts are provided by Thr12, Thr13, and Ser14. Residue Thr12 participates in sn-glycerol 3-phosphate binding. Position 16 (Arg16) interacts with ADP. Residues Arg82, Glu83, Tyr134, and Asp243 each contribute to the sn-glycerol 3-phosphate site. Glycerol contacts are provided by Arg82, Glu83, Tyr134, Asp243, and Gln244. Positions 265 and 308 each coordinate ADP. ATP is bound by residues Thr265, Gly308, Gln312, and Gly409. The ADP site is built by Gly409 and Asn413.

The protein belongs to the FGGY kinase family.

The enzyme catalyses glycerol + ATP = sn-glycerol 3-phosphate + ADP + H(+). Its pathway is polyol metabolism; glycerol degradation via glycerol kinase pathway; sn-glycerol 3-phosphate from glycerol: step 1/1. Inhibited by fructose 1,6-bisphosphate (FBP). Functionally, key enzyme in the regulation of glycerol uptake and metabolism. Catalyzes the phosphorylation of glycerol to yield sn-glycerol 3-phosphate. This is Glycerol kinase from Petrotoga mobilis (strain DSM 10674 / SJ95).